A 409-amino-acid polypeptide reads, in one-letter code: Growth-regulating factor 8 (409 aa).

2 stretches are compositionally biased toward gly residues: residues Met1–His10 and Gln27–Gln36. Residues Met1 to Ser81 form a disordered region. Low complexity predominate over residues Ser56–Cys68. Residues Pro107 to Arg142 form the QLQ domain. Residues Asp158–Gly202 enclose the WRC domain. Short sequence motifs (bipartite nuclear localization signal) lie at residues Arg163–Arg173 and Arg191–Lys198. A disordered region spans residues Ser221–Asp242.

Belongs to the GRF family.

Its subcellular location is the nucleus. Transcription activator that plays a regulatory role in gibberellin-induced stem elongation. The protein is Growth-regulating factor 8 (GRF8) of Oryza sativa subsp. japonica (Rice).